Consider the following 290-residue polypeptide: Probable ATP-dependent kinase TDA10 (290 aa).

Glycine 38–serine 45 contributes to the ATP binding site.

The protein belongs to the GLYK kinase family.

It is found in the cytoplasm. The protein resides in the nucleus. ATP-dependent kinase whose specificity is not yet known. The chain is Probable ATP-dependent kinase TDA10 (TDA10) from Saccharomyces cerevisiae (strain ATCC 204508 / S288c) (Baker's yeast).